Here is a 92-residue protein sequence, read N- to C-terminus: uncharacterized protein (92 aa).

The 59-residue stretch at 25–83 (LEEKLKQEKIDRKYLAQVTNIPYTTVSRIMRAEANREFNPEIDTILKIAKYFNCTMDEV) folds into the HTH cro/C1-type domain. Residues 36–55 (RKYLAQVTNIPYTTVSRIMR) constitute a DNA-binding region (H-T-H motif).

This is an uncharacterized protein from Rickettsia prowazekii (strain Madrid E).